The primary structure comprises 313 residues: Ribosomal protein L11 methyltransferase (313 aa).

Residues threonine 151, glycine 172, aspartate 194, and asparagine 245 each coordinate S-adenosyl-L-methionine.

Belongs to the methyltransferase superfamily. PrmA family.

The protein localises to the cytoplasm. The enzyme catalyses L-lysyl-[protein] + 3 S-adenosyl-L-methionine = N(6),N(6),N(6)-trimethyl-L-lysyl-[protein] + 3 S-adenosyl-L-homocysteine + 3 H(+). Functionally, methylates ribosomal protein L11. The polypeptide is Ribosomal protein L11 methyltransferase (Nitrosomonas europaea (strain ATCC 19718 / CIP 103999 / KCTC 2705 / NBRC 14298)).